The chain runs to 1221 residues: DNA topoisomerase 2 (1221 aa).

ATP is bound by residues Asn-65, Asn-94, 122–124 (SSN), 135–142 (GRHGYGAK), and 352–354 (QNK). The 115-residue stretch at 432–546 (RTLIVTEGDS…SLLVRNPGFI (115 aa)) folds into the Toprim domain. Residues Glu-438, Asp-515, and Asp-517 each contribute to the Mg(2+) site. The 417-residue stretch at 681–1097 (LAHSVDGLKP…TPVQLWLGEL (417 aa)) folds into the Topo IIA-type catalytic domain. Tyr-771 (O-(5'-phospho-DNA)-tyrosine intermediate) is an active-site residue. The interval 952–961 (GLTQRIHING) is interaction with DNA. Residues 1158–1198 (VPPPTKRGAGGRSDGDGGATAAGAAAAVGGRGEKKGPGRAG) are disordered. Gly residues predominate over residues 1165 to 1177 (GAGGRSDGDGGAT).

It belongs to the type II topoisomerase family. In terms of assembly, homodimer. Mg(2+) is required as a cofactor. It depends on Mn(2+) as a cofactor. The cofactor is Ca(2+).

It localises to the nucleus. The catalysed reaction is ATP-dependent breakage, passage and rejoining of double-stranded DNA.. Functionally, control of topological states of DNA by transient breakage and subsequent rejoining of DNA strands. Topoisomerase II makes double-strand breaks. The protein is DNA topoisomerase 2 (TOP2) of Trypanosoma brucei brucei.